Consider the following 753-residue polypeptide: 5-methyltetrahydropteroyltriglutamate--homocysteine methyltransferase (753 aa).

5-methyltetrahydropteroyltri-L-glutamate is bound by residues 17–20 (RELK) and K117. Residues 431 to 433 (IGS) and E484 each bind L-homocysteine. Residues 431–433 (IGS) and E484 each bind L-methionine. 5-methyltetrahydropteroyltri-L-glutamate-binding positions include 515 to 516 (RC) and W561. Position 599 (D599) interacts with L-homocysteine. L-methionine is bound at residue D599. E605 lines the 5-methyltetrahydropteroyltri-L-glutamate pocket. 3 residues coordinate Zn(2+): H641, C643, and E665. H694 functions as the Proton donor in the catalytic mechanism. C726 is a Zn(2+) binding site.

The protein belongs to the vitamin-B12 independent methionine synthase family. Zn(2+) serves as cofactor.

It carries out the reaction 5-methyltetrahydropteroyltri-L-glutamate + L-homocysteine = tetrahydropteroyltri-L-glutamate + L-methionine. The protein operates within amino-acid biosynthesis; L-methionine biosynthesis via de novo pathway; L-methionine from L-homocysteine (MetE route): step 1/1. Functionally, catalyzes the transfer of a methyl group from 5-methyltetrahydrofolate to homocysteine resulting in methionine formation. This is 5-methyltetrahydropteroyltriglutamate--homocysteine methyltransferase from Escherichia coli O9:H4 (strain HS).